We begin with the raw amino-acid sequence, 180 residues long: MSSTTPTTEPDQLPPHLDPQTYPRTTTNPTLNTHITLTYHPLDPTSALSKISSPNAGANVLFLGTTRNSFEDRPVAQLSYTAYPPLALKTLSKIAEDAVAKHELLGVVIGHRLGDVPIGESSIVIAVSAGHRGAAWRAGEEVLELCKEKAEIWKKEVFVDGQGEWRANRDRDAEGKLVQG.

Positions 1-10 are enriched in polar residues; the sequence is MSSTTPTTEP. The interval 1–31 is disordered; that stretch reads MSSTTPTTEPDQLPPHLDPQTYPRTTTNPTL. Residues 21–31 show a composition bias toward low complexity; sequence TYPRTTTNPTL. Substrate is bound by residues 131 to 132, K147, and 154 to 156; these read HR and KKE.

The protein belongs to the MoaE family. MOCS2B subfamily. Heterotetramer; composed of 2 small (MOCS2A) and 2 large (MOCS2B) subunits.

It localises to the cytoplasm. It catalyses the reaction 2 [molybdopterin-synthase sulfur-carrier protein]-C-terminal-Gly-aminoethanethioate + cyclic pyranopterin phosphate + H2O = molybdopterin + 2 [molybdopterin-synthase sulfur-carrier protein]-C-terminal Gly-Gly + 2 H(+). Its pathway is cofactor biosynthesis; molybdopterin biosynthesis. Functionally, catalytic subunit of the molybdopterin synthase complex, a complex that catalyzes the conversion of precursor Z into molybdopterin. Acts by mediating the incorporation of 2 sulfur atoms from thiocarboxylated MOCS2A into precursor Z to generate a dithiolene group. The chain is Molybdopterin synthase catalytic subunit from Aspergillus niger (strain ATCC MYA-4892 / CBS 513.88 / FGSC A1513).